The following is a 63-amino-acid chain: Large ribosomal subunit protein bL32 (63 aa).

Belongs to the bacterial ribosomal protein bL32 family.

The chain is Large ribosomal subunit protein bL32 from Lacticaseibacillus paracasei (strain ATCC 334 / BCRC 17002 / CCUG 31169 / CIP 107868 / KCTC 3260 / NRRL B-441) (Lactobacillus paracasei).